The chain runs to 686 residues: Kinesin light chain (686 aa).

2 disordered regions span residues 1 to 23 (MSGSKLSTPNNSGGGQGNLSQEQ) and 158 to 204 (KYDE…SVSA). Residues 20–160 (SQEQIITGTR…EYMNSIKKYD (141 aa)) are a coiled coil. TPR repeat units follow at residues 215-248 (LRTLHNLVIQYASQSRYEVAVPLCKQALEDLEKT), 257-290 (ATMLNILALVYRDQNKYKEAGNLLHDALAIREKT), 299-332 (AATLNNLAVLYGKRGKYKEAEPLCKRALEIREKV), 341-374 (AKQLNNLALLCQNQGKYEEVEWYYQRALEIYEKK), 383-416 (AKTKNNLAAAYLKQGKYKAAETLYKQVLTRAHER), and 472-505 (TTTLKNLGALYRRQGKYDAAEILEECAMKSRRNA). Disordered stretches follow at residues 520 to 558 (QDLSTDVPRSEAMAKERHHRRSSGTPRHGSTESVSYEKT) and 586 to 686 (GYVE…SGNF). Residues 675-686 (DNLSSRRQSGNF) are compositionally biased toward polar residues.

It belongs to the kinesin light chain family. Oligomeric complex composed of two heavy chains and two light chains. Post-translationally, phosphorylation may modulate the process of mechanochemical coupling.

The protein resides in the cytoplasm. It is found in the cytoskeleton. Its function is as follows. Kinesin is a microtubule-associated force-producing protein that may play a role in organelle transport. The light chain may function in coupling of cargo to the heavy chain or in the modulation of its ATPase activity. The sequence is that of Kinesin light chain from Strongylocentrotus purpuratus (Purple sea urchin).